The following is a 353-amino-acid chain: Fe(3+) ions import ATP-binding protein FbpC (353 aa).

Residues 9–239 (VTFQNVRKSF…PASSFIADFM (231 aa)) form the ABC transporter domain. Residue 41–48 (GPSGCGKT) coordinates ATP.

The protein belongs to the ABC transporter superfamily. Fe(3+) ion importer (TC 3.A.1.10) family. In terms of assembly, the complex is composed of two ATP-binding proteins (FbpC), two transmembrane proteins (FbpB) and a solute-binding protein (FbpA).

It is found in the cell inner membrane. It carries out the reaction Fe(3+)(out) + ATP + H2O = Fe(3+)(in) + ADP + phosphate + H(+). Its function is as follows. Part of the ABC transporter complex FbpABC involved in Fe(3+) ions import. Responsible for energy coupling to the transport system. The sequence is that of Fe(3+) ions import ATP-binding protein FbpC from Rhizobium etli (strain ATCC 51251 / DSM 11541 / JCM 21823 / NBRC 15573 / CFN 42).